We begin with the raw amino-acid sequence, 344 residues long: Phosphoribosylformylglycinamidine cyclo-ligase (344 aa).

This sequence belongs to the AIR synthase family.

The protein localises to the cytoplasm. It catalyses the reaction 2-formamido-N(1)-(5-O-phospho-beta-D-ribosyl)acetamidine + ATP = 5-amino-1-(5-phospho-beta-D-ribosyl)imidazole + ADP + phosphate + H(+). Its pathway is purine metabolism; IMP biosynthesis via de novo pathway; 5-amino-1-(5-phospho-D-ribosyl)imidazole from N(2)-formyl-N(1)-(5-phospho-D-ribosyl)glycinamide: step 2/2. The chain is Phosphoribosylformylglycinamidine cyclo-ligase from Neisseria gonorrhoeae (strain ATCC 700825 / FA 1090).